Here is a 502-residue protein sequence, read N- to C-terminus: 4,4'-diapophytoene desaturase (4,4'-diaponeurosporene-forming) (502 aa).

5–17 (VIGAGVTGLAAAA) is a binding site for FAD.

This sequence belongs to the carotenoid/retinoid oxidoreductase family. CrtN subfamily.

The catalysed reaction is 15-cis-4,4'-diapophytoene + 3 FAD + 3 H(+) = all-trans-4,4'-diaponeurosporene + 3 FADH2. It functions in the pathway carotenoid biosynthesis; staphyloxanthin biosynthesis; staphyloxanthin from farnesyl diphosphate: step 2/5. Involved in the biosynthesis of the yellow-orange carotenoid staphyloxanthin, which plays a role in the virulence via its protective function against oxidative stress. Catalyzes three successive dehydrogenation reactions that lead to the introduction of three double bonds into 4,4'-diapophytoene (dehydrosqualene), with 4,4'-diapophytofluene and 4,4'-diapo-zeta-carotene as intermediates, and 4,4'-diaponeurosporene (the major deep-yellow pigment in staphylococci strains) as the end product. The protein is 4,4'-diapophytoene desaturase (4,4'-diaponeurosporene-forming) of Staphylococcus aureus (strain COL).